The sequence spans 33 residues: Photosystem II reaction center protein Psb30 (33 aa).

A helical membrane pass occupies residues 5–25 (LALTLVSLVLVVSAGPLVVVL).

The protein belongs to the Psb30/Ycf12 family. As to quaternary structure, PSII is composed of 1 copy each of membrane proteins PsbA, PsbB, PsbC, PsbD, PsbE, PsbF, PsbH, PsbI, PsbJ, PsbK, PsbL, PsbM, PsbT, PsbX, PsbY, PsbZ, Psb30/Ycf12, peripheral proteins of the oxygen-evolving complex and a large number of cofactors. It forms dimeric complexes.

The protein resides in the plastid. It localises to the chloroplast thylakoid membrane. Its function is as follows. A core subunit of photosystem II (PSII), required for optimal photosynthesis, probably helps stabilize the reaction center. This is Photosystem II reaction center protein Psb30 from Chlamydomonas reinhardtii (Chlamydomonas smithii).